Here is a 156-residue protein sequence, read N- to C-terminus: Egg-lysin (156 aa).

A signal peptide spans 1-18; the sequence is MKLLVLCVFAMMATLAVS.

Monomer. Homodimer. Molecules associate into dimers and then rapidly dissociate again. Interacts (as a monomer) with the egg vitelline layer protein VERL (via VERL repeats); each VERL chain can bind multiple copies of lysin. In terms of tissue distribution, sperm.

Its subcellular location is the cytoplasmic vesicle. The protein resides in the secretory vesicle. It is found in the acrosome lumen. Its function is as follows. Creates a 3 um hole in the egg vitelline layer through which the sperm passes. Does not have enzyme activity. Species-specific interaction between the sperm protein lysin and the egg protein VERL exposes a basic surface on lysin that may dissociate the egg vitelline layer via electrostatic repulsion. Plays a role in ensuring species-specific fertilization. This Haliotis cracherodii (Black abalone) protein is Egg-lysin.